The sequence spans 293 residues: Acetylglutamate kinase (293 aa).

Residues 68–69, arginine 90, and asparagine 189 each bind substrate; that span reads GG.

The protein belongs to the acetylglutamate kinase family. ArgB subfamily.

It is found in the cytoplasm. It catalyses the reaction N-acetyl-L-glutamate + ATP = N-acetyl-L-glutamyl 5-phosphate + ADP. Its pathway is amino-acid biosynthesis; L-arginine biosynthesis; N(2)-acetyl-L-ornithine from L-glutamate: step 2/4. Catalyzes the ATP-dependent phosphorylation of N-acetyl-L-glutamate. This is Acetylglutamate kinase from Caldicellulosiruptor bescii (strain ATCC BAA-1888 / DSM 6725 / KCTC 15123 / Z-1320) (Anaerocellum thermophilum).